The following is a 427-amino-acid chain: Gamma-glutamyl phosphate reductase (427 aa).

It belongs to the gamma-glutamyl phosphate reductase family.

It is found in the cytoplasm. It carries out the reaction L-glutamate 5-semialdehyde + phosphate + NADP(+) = L-glutamyl 5-phosphate + NADPH + H(+). The protein operates within amino-acid biosynthesis; L-proline biosynthesis; L-glutamate 5-semialdehyde from L-glutamate: step 2/2. In terms of biological role, catalyzes the NADPH-dependent reduction of L-glutamate 5-phosphate into L-glutamate 5-semialdehyde and phosphate. The product spontaneously undergoes cyclization to form 1-pyrroline-5-carboxylate. In Rhizobium etli (strain CIAT 652), this protein is Gamma-glutamyl phosphate reductase.